The following is a 247-amino-acid chain: MKIIISPAKKMVEDTDSFDISKLPIFKDKAEVLLTWLKSKNYDELKNIWKCNDKIAKLNYDRVQDMNLDENLTPAVMAYSGIQYQAMGPQVFTQEALQRAAKDLYIISGFYGILGAMDGITPYRLEMQAKVDINDQHTLYQFWGDSIYQELYRDNELVVNLASKEYSKAIERYLKPQDKFIICSFKKEKNGKYVQQATAAKQARGDMVRYILENNIKEIDEIKNFSVNGYQYEPQFSTDTELVFIKN.

This sequence belongs to the UPF0246 family.

The sequence is that of UPF0246 protein LSL_1719 from Ligilactobacillus salivarius (strain UCC118) (Lactobacillus salivarius).